The following is a 570-amino-acid chain: MSFDGMFTYGMTHELNEKIMGGRITKIHQPYKHDVIFHIRAKGKNQKLLLSAHPSYSRVHITAQAYENPSEPPMFCMLLRKHIEGGFIEKIEQAGLDRIMIFHIKSRNEIGDETVRKLYVEIMGRHSNIILTDAAENVIIDGLKHLSPSMNSYRTVLPGQDYKLPPAQDKISPLEASEDDILRHLSFQEGRLDKQIVDHFSGVSPLFAKEAVHRAGLANKVTLPKALLALFAEVKEHRFIPNITTVNGKEYFYLLELTHLKGEARRFDSLSELLDRFYFGKAERDRVKQQAQDLERFVVNERKKNANKIKKLEKTLEYSENAKEFQLYGELLTANLYMLKKGDKQAEVINYYDEESPTITIPLNPNKTPSENAQAYFTKYQKAKNSVAVVEEQIRLAQEEIEYFDQLIQQLSSASPRDISEIREELVEGKYLRPKQQKGQKKQKPHNPVLETYESTSGLTILVGKNNRQNEYLTTRVAARDDIWLHTKDIPGSHVVIRSSEPDEQTIMEAATIAAYFSKAKDSSSVPVDYTKIRHVKKPNGAKPGFVTYDSQHTVFVTPDADTVIKLKKS.

An NFACT-N domain region spans residues 1–173; the sequence is MSFDGMFTYG…LPPAQDKISP (173 aa). Residues 179–281 form a hhH domain region; it reads DDILRHLSFQ…ELLDRFYFGK (103 aa). 2 coiled-coil regions span residues 279-336 and 368-430; these read FGKA…TANL and TPSE…VEGK. Residues 282-434 form a coiled-coil-M (CCM) region; it reads AERDRVKQQA…ELVEGKYLRP (153 aa). An NFACT-R region spans residues 446-570; the sequence is HNPVLETYES…ADTVIKLKKS (125 aa).

The protein belongs to the NEMF family. As to quaternary structure, associates with isolated or stalled 50S ribosomal subunits. Binds to RqcP. Interacts with ribosomal protein uL11. Displaced from the 50S subunit by thiostrepton. In crystallized 50S subunits RqcH is variously associated with A/P-site tRNA, P-site tRNA and RqcP, an E-site tRNA or A- and P-site tRNAs and RqcP2(YlmH).

In terms of biological role, key component of the ribosome quality control system (RQC), a ribosome-associated complex that mediates the extraction of incompletely synthesized nascent chains from stalled ribosomes and their subsequent degradation. RqcH recruits Ala-charged tRNA, and with RqcP directs the elongation of stalled nascent chains on 50S ribosomal subunits, leading to non-templated C-terminal alanine extensions (Ala tail). The Ala tail promotes nascent chain degradation. RqcH, RqcP and charged tRNA(Ala) are necessary and sufficient to add an Ala tail to a model stalled nascent peptide; does not add Val. Binds the P-site tRNA in 50S ribosomal subunit, unwinds the anticodon stem and interacts with the splayed anticodon. Selectively binds tRNA(Ala) isoacceptors, even in the absence of the 50S ribosomal subunit. Adds between 1 and at least 8 Ala residues to the nascent chain; detection of the Ala tail requires either deletion of clpP or its inhibition. Binds to 50S ribosomal subunits, at least 30% of which contain a P-site tRNA and thus are obstructed. The polypeptide is Rqc2 homolog RqcH (Bacillus subtilis (strain 168)).